The sequence spans 174 residues: MLVPHDRMVGNKRRGTMRVLGIGTDLVYMPRVVELLRRMPAGSGAHARFAGKFMHARERAGALGAKDQARYVAGVWAAKEALYKAVAGADAPPAATLYRACYKEADAVGRPTLQVDAGELQRAGHMRFWEERLAGTRFLLSVSHDEDYLVAFVCHVADETFRAPDERQRITKNS.

Belongs to the P-Pant transferase superfamily. AcpS family.

The protein localises to the mitochondrion. The enzyme catalyses apo-[ACP] + CoA = holo-[ACP] + adenosine 3',5'-bisphosphate + H(+). Functionally, transfers the 4'-phosphopantetheine moiety from coenzyme A to a Ser of mitochondrial acyl-carrier-protein. The sequence is that of Mitochondrial holo-[acyl-carrier-protein] synthase (PPT2) from Eremothecium gossypii (strain ATCC 10895 / CBS 109.51 / FGSC 9923 / NRRL Y-1056) (Yeast).